The following is a 208-amino-acid chain: Holliday junction branch migration complex subunit RuvA (208 aa).

Residues Met1–Arg64 are domain I. Residues Ser65–Val143 are domain II. Residues Ala144–Arg152 form a flexible linker region. Residues Thr153–Arg208 are domain III.

Belongs to the RuvA family. As to quaternary structure, homotetramer. Forms an RuvA(8)-RuvB(12)-Holliday junction (HJ) complex. HJ DNA is sandwiched between 2 RuvA tetramers; dsDNA enters through RuvA and exits via RuvB. An RuvB hexamer assembles on each DNA strand where it exits the tetramer. Each RuvB hexamer is contacted by two RuvA subunits (via domain III) on 2 adjacent RuvB subunits; this complex drives branch migration. In the full resolvosome a probable DNA-RuvA(4)-RuvB(12)-RuvC(2) complex forms which resolves the HJ.

Its subcellular location is the cytoplasm. In terms of biological role, the RuvA-RuvB-RuvC complex processes Holliday junction (HJ) DNA during genetic recombination and DNA repair, while the RuvA-RuvB complex plays an important role in the rescue of blocked DNA replication forks via replication fork reversal (RFR). RuvA specifically binds to HJ cruciform DNA, conferring on it an open structure. The RuvB hexamer acts as an ATP-dependent pump, pulling dsDNA into and through the RuvAB complex. HJ branch migration allows RuvC to scan DNA until it finds its consensus sequence, where it cleaves and resolves the cruciform DNA. The protein is Holliday junction branch migration complex subunit RuvA of Methylorubrum populi (strain ATCC BAA-705 / NCIMB 13946 / BJ001) (Methylobacterium populi).